A 211-amino-acid polypeptide reads, in one-letter code: Thymidylate kinase (211 aa).

10 to 17 (GLDGSGKT) contributes to the ATP binding site.

This sequence belongs to the thymidylate kinase family.

The enzyme catalyses dTMP + ATP = dTDP + ADP. Phosphorylation of dTMP to form dTDP in both de novo and salvage pathways of dTTP synthesis. The sequence is that of Thymidylate kinase from Blochmanniella floridana.